A 417-amino-acid polypeptide reads, in one-letter code: Serine hydroxymethyltransferase (417 aa).

Residues Leu121 and 125–127 (GHL) each bind (6S)-5,6,7,8-tetrahydrofolate. An N6-(pyridoxal phosphate)lysine modification is found at Lys229. Residue 355 to 357 (SPF) participates in (6S)-5,6,7,8-tetrahydrofolate binding.

The protein belongs to the SHMT family. Homodimer. It depends on pyridoxal 5'-phosphate as a cofactor.

The protein localises to the cytoplasm. It catalyses the reaction (6R)-5,10-methylene-5,6,7,8-tetrahydrofolate + glycine + H2O = (6S)-5,6,7,8-tetrahydrofolate + L-serine. It functions in the pathway one-carbon metabolism; tetrahydrofolate interconversion. Its pathway is amino-acid biosynthesis; glycine biosynthesis; glycine from L-serine: step 1/1. In terms of biological role, catalyzes the reversible interconversion of serine and glycine with tetrahydrofolate (THF) serving as the one-carbon carrier. This reaction serves as the major source of one-carbon groups required for the biosynthesis of purines, thymidylate, methionine, and other important biomolecules. Also exhibits THF-independent aldolase activity toward beta-hydroxyamino acids, producing glycine and aldehydes, via a retro-aldol mechanism. The polypeptide is Serine hydroxymethyltransferase (Shewanella baltica (strain OS185)).